We begin with the raw amino-acid sequence, 375 residues long: Alcohol dehydrogenase 6 (375 aa).

The Zn(2+) site is built by Cys-47, His-69, Cys-99, Cys-102, Cys-105, Cys-113, and Cys-175. NAD(+) contacts are provided by residues 200–205 (GLGGVG), Asp-224, Lys-229, 293–295 (VGS), and Arg-370.

It belongs to the zinc-containing alcohol dehydrogenase family. Class-V subfamily. Dimer. The cofactor is Zn(2+). In terms of tissue distribution, liver.

It localises to the cytoplasm. The catalysed reaction is a primary alcohol + NAD(+) = an aldehyde + NADH + H(+). It carries out the reaction a secondary alcohol + NAD(+) = a ketone + NADH + H(+). Its function is as follows. Alcohol dehydrogenase. Catalyzes the NAD-dependent oxidation of primary alcohols to the corresponding aldehydes. Oxidizes secondary alcohols to the corresponding ketones. In Peromyscus maniculatus (North American deer mouse), this protein is Alcohol dehydrogenase 6 (ADH6).